The primary structure comprises 280 residues: uncharacterized protein (280 aa).

Disordered regions lie at residues Asp-20 to Gln-41, Ile-170 to Ala-199, and Gly-251 to Phe-280. The span at Gln-25 to Gln-41 shows a compositional bias: low complexity. Positions Glu-178–Ala-199 are enriched in basic and acidic residues.

This is an uncharacterized protein from Dictyostelium discoideum (Social amoeba).